A 248-amino-acid polypeptide reads, in one-letter code: MDILQFPINMLNYFYEISGVEVGQHFYWQIGGFQVHAQVLITSWIVIAVLLGSATLAVRDPQIIPNGAQNFLEYVLEFVRDLARTQIGEEEYGPWVPFIGTMFLFIFVSNWAGALFPWGIIKLPHGELAAPTNDINTTVALALLTSVAYFYAGFTKRGLGYFGKYIQPTPILLPINILEDFTKPLSLSFRLFGNILADELVVAVLVSLVPIVVPIPVMFLGLFTSGIQALIFATLAAAYIGESMEGHH.

5 helical membrane-spanning segments follow: residues 38-58, 96-116, 135-155, 200-220, and 221-241; these read QVLI…TLAV, VPFI…GALF, INTT…AGFT, LVVA…VMFL, and GLFT…AYIG.

The protein belongs to the ATPase A chain family. As to quaternary structure, F-type ATPases have 2 components, CF(1) - the catalytic core - and CF(0) - the membrane proton channel. CF(1) has five subunits: alpha(3), beta(3), gamma(1), delta(1), epsilon(1). CF(0) has four main subunits: a, b, b' and c.

It is found in the plastid. It localises to the chloroplast thylakoid membrane. Its function is as follows. Key component of the proton channel; it plays a direct role in the translocation of protons across the membrane. This Cryptomeria japonica (Japanese cedar) protein is ATP synthase subunit a, chloroplastic.